Consider the following 72-residue polypeptide: Large ribosomal subunit protein uL29 (72 aa).

The protein belongs to the universal ribosomal protein uL29 family.

This Chlamydia pneumoniae (Chlamydophila pneumoniae) protein is Large ribosomal subunit protein uL29 (rpmC).